Consider the following 243-residue polypeptide: Sugar fermentation stimulation protein homolog (243 aa).

The protein belongs to the SfsA family.

This chain is Sugar fermentation stimulation protein homolog, found in Acaryochloris marina (strain MBIC 11017).